The primary structure comprises 326 residues: MQSNALLKPRIIDVQSISPVQARVTMEPFERGFGHTLGNALRRILLSSLPGHAPTEVSIEGVLHEYSTLDGMREDIVDLLLNLKGVVLKLHNRSEAMLTLSKSGEGVVTARDIEGGHDVEIINPDHVIAHLAPGGKLEMQIKVEQGRGYVPGNARPVSAENKTIGRIVLDASFSPVRRVSYLVESARVEQRTDLDRLVIDIETNGAVDPEEAIRYAARVLMDQLSVFADLEGTPVAVVPEKTPSIDPVLLRPVDDLELTVRSANCLKAENIYYIGDLIQRTETELLKTPNLGRKSLNEIKEVLASRGLTLGMKLENWPPAGLEKLG.

The tract at residues 1–231 is alpha N-terminal domain (alpha-NTD); that stretch reads MQSNALLKPR…DQLSVFADLE (231 aa). An alpha C-terminal domain (alpha-CTD) region spans residues 245–326; it reads IDPVLLRPVD…WPPAGLEKLG (82 aa).

The protein belongs to the RNA polymerase alpha chain family. In terms of assembly, homodimer. The RNAP catalytic core consists of 2 alpha, 1 beta, 1 beta' and 1 omega subunit. When a sigma factor is associated with the core the holoenzyme is formed, which can initiate transcription.

It catalyses the reaction RNA(n) + a ribonucleoside 5'-triphosphate = RNA(n+1) + diphosphate. Its function is as follows. DNA-dependent RNA polymerase catalyzes the transcription of DNA into RNA using the four ribonucleoside triphosphates as substrates. This Azoarcus sp. (strain BH72) protein is DNA-directed RNA polymerase subunit alpha.